The sequence spans 355 residues: Sesquiterpene synthase MAJ_08936 (355 aa).

Residues Asp-91 and Asp-96 each contribute to the Mg(2+) site. The short motif at 91–96 (DDLFVD) is the DDXXXD motif element. Arg-184 provides a ligand contact to substrate. 3 residues coordinate Mg(2+): Asn-230, Ser-234, and Glu-238.

The protein belongs to the terpene synthase family. Mg(2+) serves as cofactor.

It catalyses the reaction (2E,6E)-farnesyl diphosphate + H2O = (+)-corvol ether B + diphosphate. The enzyme catalyses (2E,6E)-farnesyl diphosphate + H2O = (+)-corvol ether A + diphosphate. Terpene synthase that catalyzes the conversion of (2E,6E)-farnesyl diphosphate (FPP) into sesquiterpenes which are important for fungi-environment interactions. Produces a mixture consisting of 8 sesquiterpenes including corvol ethers A and B, as well as traces of epizonarene, gamma-cadinene, delta-cadinene, alpha-cadinene, alpha-cadinol, and an unidentified sesquiterpene. The major product is corvol ether A. The sequence is that of Sesquiterpene synthase MAJ_08936 from Metarhizium majus (strain ARSEF 297).